A 128-amino-acid chain; its full sequence is Azurin (128 aa).

In terms of domain architecture, Plastocyanin-like spans 1–128 (AECKTTIDST…SMMKGTVTLK (128 aa)). A disulfide bridge links Cys3 with Cys26. Positions 46, 112, 117, and 121 each coordinate Cu cation.

It is found in the periplasm. Transfers electrons from cytochrome c551 to cytochrome oxidase. The polypeptide is Azurin (Pseudomonas fluorescens biotype B).